A 217-amino-acid chain; its full sequence is Coiled-coil domain-containing protein 124-A (217 aa).

A disordered region spans residues 1–128 (MPKKFQGENT…HLEMPLEENV (128 aa)). 3 stretches are compositionally biased toward basic and acidic residues: residues 18–45 (RKAE…DDKH), 52–74 (RKED…QRLL), and 95–128 (TRAE…EENV). Residues 46-82 (VARKGQRKEDKEKKRLEQLERKKESQRLLDEEDSKMK) are a coiled coil.

The protein belongs to the CCDC124 family. In terms of assembly, associates with translationally inactive ribosomes in the nonrotated state.

The protein resides in the cytoplasm. It localises to the cytoskeleton. It is found in the microtubule organizing center. Its subcellular location is the centrosome. The protein localises to the midbody. Ribosome-binding protein involved in ribosome hibernation: associates with translationally inactive ribosomes and stabilizes the nonrotated conformation of the 80S ribosome, thereby promoting ribosome preservation and storage. The polypeptide is Coiled-coil domain-containing protein 124-A (ccdc124-a) (Xenopus laevis (African clawed frog)).